Reading from the N-terminus, the 75-residue chain is MSRICQITGKKRMIGNNRSHALNATKRKFLINIQYHRFWIADEKRFIKLHVSTNGMRYIDKKGIETVIRKINMKK.

This sequence belongs to the bacterial ribosomal protein bL28 family.

The chain is Large ribosomal subunit protein bL28 from Buchnera aphidicola subsp. Acyrthosiphon pisum (strain APS) (Acyrthosiphon pisum symbiotic bacterium).